Consider the following 160-residue polypeptide: Cytochrome b6-f complex subunit 4 (160 aa).

3 helical membrane passes run 36–56 (LLYTFPVVILGTITCCIGLAL), 95–115 (LLGVLSMASVPLGLIFVPFIE), and 127–147 (PIATTVFLVGTVVTIWLGIGA).

This sequence belongs to the cytochrome b family. PetD subfamily. The 4 large subunits of the cytochrome b6-f complex are cytochrome b6, subunit IV (17 kDa polypeptide, petD), cytochrome f and the Rieske protein, while the 4 small subunits are petG, petL, petM and petN. The complex functions as a dimer.

It is found in the plastid. The protein resides in the chloroplast thylakoid membrane. In terms of biological role, component of the cytochrome b6-f complex, which mediates electron transfer between photosystem II (PSII) and photosystem I (PSI), cyclic electron flow around PSI, and state transitions. This chain is Cytochrome b6-f complex subunit 4, found in Cyanidioschyzon merolae (strain NIES-3377 / 10D) (Unicellular red alga).